The following is a 344-amino-acid chain: Adenosine kinase (344 aa).

Aspartate 298 is a catalytic residue.

It belongs to the carbohydrate kinase PfkB family. Requires Mg(2+) as cofactor.

It catalyses the reaction adenosine + ATP = AMP + ADP + H(+). It participates in purine metabolism; AMP biosynthesis via salvage pathway; AMP from adenosine: step 1/1. The polypeptide is Adenosine kinase (ADK) (Schizophyllum commune (Split gill fungus)).